The sequence spans 395 residues: MLGRSRLALVLLAAAVSCAVAQHAPPWTEDCRKSTYPPSGPTYRGPAPWYTINLDLPPYKRWHELMVDKAPMLKVIVNSLKNMVNTFVPSGKVMQIVDEKLPGLLGNFPGPFEEEMKGIAAVTDIPLGEIISYNIFYEFFTLCTSIVAEDKKGHLIHGRNMDFGVFLGWNINNDTWVITEELKPLTVNLDFQRNNKTVFKASSFAGYVGMLTGFKPGLFSLTLNERFSVNGGYLGILEWILGKKDAMWIGFLTRTVLENSTSYEEAKNILTKTKILAPAYFILGGNQSGEGCVITRDRKESLDVYELDAKQGRWYVVQTNYDRWKNPFFLDDRRTPAKMCLNRTTQENISFENMYDVLSTKPVLNKLTVFTTLIDVTKDQFETYMRDCPDPCIGW.

The first 21 residues, M1–A21, serve as a signal peptide directing secretion. The cysteines at positions 31 and 340 are disulfide-linked. The active-site Nucleophile is C143. N-linked (GlcNAc...) asparagine glycosylation is found at N173, N195, N259, N286, N342, and N348. An intrachain disulfide couples C388 to C392.

It belongs to the acid ceramidase family. In terms of assembly, heterodimer; disulfide-linked. The heterodimer is composed of the disulfide-linked alpha and beta chains produced by autocatalytic cleavage of the precursor. Post-translationally, N-glycosylated. Proteolytically cleaved into two chains alpha and beta that remain associated via a disulfide bond. Cleavage gives rise to a conformation change that activates the enzyme. The same catalytic Cys residue mediates the autoproteolytic cleavage and subsequent hydrolysis of lipid substrates. The beta chain may undergo an additional C-terminal processing.

Its subcellular location is the lysosome. It is found in the secreted. It carries out the reaction an N-acylsphing-4-enine + H2O = sphing-4-enine + a fatty acid. The enzyme catalyses N-dodecanoylsphing-4-enine + H2O = dodecanoate + sphing-4-enine. It catalyses the reaction N-tetradecanoylsphing-4-enine + H2O = tetradecanoate + sphing-4-enine. The catalysed reaction is N-hexadecanoylsphing-4-enine + H2O = sphing-4-enine + hexadecanoate. It carries out the reaction N-octadecanoylsphing-4-enine + H2O = sphing-4-enine + octadecanoate. The enzyme catalyses N-dodecanoyl-(4R)-hydroxysphinganine + H2O = (4R)-hydroxysphinganine + dodecanoate. It catalyses the reaction N-(dodecanoyl)-sphinganine + H2O = dodecanoate + sphinganine. The catalysed reaction is N-(acetyl)-sphing-4-enine + H2O = sphing-4-enine + acetate. It carries out the reaction N-(hexanoyl)sphing-4-enine + H2O = hexanoate + sphing-4-enine. The enzyme catalyses N-octanoylsphing-4-enine + H2O = octanoate + sphing-4-enine. It catalyses the reaction N-(9Z-octadecenoyl)-sphing-4-enine + H2O = sphing-4-enine + (9Z)-octadecenoate. The catalysed reaction is N-dodecanoylethanolamine + H2O = dodecanoate + ethanolamine. The protein operates within lipid metabolism; sphingolipid metabolism. In terms of biological role, lysosomal ceramidase that hydrolyzes sphingolipid ceramides into sphingosine and free fatty acids at acidic pH. Ceramides, sphingosine, and its phosphorylated form sphingosine-1-phosphate are bioactive lipids that mediate cellular signaling pathways regulating several biological processes including cell proliferation, apoptosis and differentiation. Has a higher catalytic efficiency towards C12-ceramides versus other ceramides. Also catalyzes the reverse reaction allowing the synthesis of ceramides from fatty acids and sphingosine. For the reverse synthetic reaction, the natural sphingosine D-erythro isomer is more efficiently utilized as a substrate compared to D-erythro-dihydrosphingosine and D-erythro-phytosphingosine, while the fatty acids with chain lengths of 12 or 14 carbons are the most efficiently used. Also has an N-acylethanolamine hydrolase activity. By regulating the levels of ceramides, sphingosine and sphingosine-1-phosphate in the epidermis, mediates the calcium-induced differentiation of epidermal keratinocytes. Also indirectly regulates tumor necrosis factor/TNF-induced apoptosis. By regulating the intracellular balance between ceramides and sphingosine, in adrenocortical cells, probably also acts as a regulator of steroidogenesis. The protein is Acid ceramidase of Macaca fascicularis (Crab-eating macaque).